We begin with the raw amino-acid sequence, 561 residues long: Efflux pump bfoC (561 aa).

The interval methionine 1–glutamate 55 is disordered. Residues asparagine 24 to serine 36 show a composition bias toward polar residues. The segment covering serine 38 to glutamate 55 has biased composition (basic and acidic residues). The next 13 membrane-spanning stretches (helical) occupy residues glycine 59 to cysteine 79, aspartate 103 to glycine 123, phenylalanine 128 to isoleucine 148, valine 164 to valine 184, glycine 194 to phenylalanine 214, tryptophan 222 to phenylalanine 242, alanine 257 to leucine 277, valine 293 to tryptophan 313, leucine 335 to phenylalanine 355, valine 378 to methionine 398, isoleucine 425 to valine 445, threonine 457 to alanine 477, and valine 530 to isoleucine 550.

It belongs to the major facilitator superfamily. TCR/Tet family.

It is found in the cell membrane. In terms of biological role, efflux pump; part of the gene cluster that mediates the biosynthesis of bifonsecin B, a dimeric gamma-naphthopyrone. This is Efflux pump bfoC from Aspergillus brasiliensis (strain CBS 101740 / IMI 381727 / IBT 21946).